The chain runs to 84 residues: Metallothionein type 2b (84 aa).

The protein belongs to the metallothionein superfamily. Type 15 family. In terms of tissue distribution, expressed in leaves, stems and roots.

The protein resides in the cytoplasm. The protein localises to the nucleus. Its function is as follows. Metallothioneins have a high content of cysteine residues that bind various heavy metals. Probably involved in maintaining homeostasis of essential transition metals and detoxification of toxic metals. Increases cadmium and zinc tolerance when expressed in heterologous systems. Metal chelator binding 6 cadmium or 5 zinc atoms per protein. This chain is Metallothionein type 2b, found in Colocasia esculenta (Wild taro).